The sequence spans 115 residues: UPF0738 protein SERP0585 (115 aa).

The protein belongs to the UPF0738 family.

This Staphylococcus epidermidis (strain ATCC 35984 / DSM 28319 / BCRC 17069 / CCUG 31568 / BM 3577 / RP62A) protein is UPF0738 protein SERP0585.